We begin with the raw amino-acid sequence, 261 residues long: Carnitinyl-CoA dehydratase (261 aa).

Catalysis depends on glutamate 111, which acts as the Nucleophile. The Proton acceptor role is filled by glutamate 131.

It belongs to the enoyl-CoA hydratase/isomerase family.

It catalyses the reaction (R)-carnitinyl-CoA = crotonobetainyl-CoA + H2O. The protein operates within amine and polyamine metabolism; carnitine metabolism. Catalyzes the reversible dehydration of L-carnitinyl-CoA to crotonobetainyl-CoA. The chain is Carnitinyl-CoA dehydratase from Escherichia coli O6:K15:H31 (strain 536 / UPEC).